The sequence spans 399 residues: Homocysteine-responsive endoplasmic reticulum-resident ubiquitin-like domain member 2 protein (399 aa).

The region spanning 10 to 89 (VTLVIKAPNQ…HMVHLVCASR (80 aa)) is the Ubiquitin-like domain. Disordered regions lie at residues 88–144 (SRTP…SIRH) and 211–250 (ASNQSPSNGENAQPVPRPVINSESPPPNPPRAPPNVAPEM). Over residues 95-106 (PKASTSNKSMGT) the composition is skewed to polar residues. The segment covering 107-124 (ASISRSSSEHSGSASPAS) has biased composition (low complexity). Residues 211 to 221 (ASNQSPSNGEN) are compositionally biased toward polar residues. Residues 234 to 246 (SPPPNPPRAPPNV) are compositionally biased toward pro residues. A helical membrane pass occupies residues 299-319 (FVMVMGAMILVYMHQAGWFPL).

The protein resides in the membrane. In terms of biological role, could be involved in the unfolded protein response (UPR) pathway. In Xenopus tropicalis (Western clawed frog), this protein is Homocysteine-responsive endoplasmic reticulum-resident ubiquitin-like domain member 2 protein (herpud2).